The following is a 339-amino-acid chain: Transcription initiation factor IIB (339 aa).

The TFIIB-type zinc finger occupies 39–70 (EELICPMCGSKNIIKDYERAEIVCETCGCVLQ). Zn(2+) contacts are provided by C43, C46, C62, and C65. Tandem repeats lie at residues 156–239 (SELD…SREL) and 250–331 (DYVP…ELTE).

This sequence belongs to the TFIIB family.

Functionally, stabilizes TBP binding to an archaeal box-A promoter. Also responsible for recruiting RNA polymerase II to the pre-initiation complex (DNA-TBP-TFIIB). This Methanothermococcus thermolithotrophicus (Methanococcus thermolithotrophicus) protein is Transcription initiation factor IIB.